Reading from the N-terminus, the 403-residue chain is DNA polymerase IV (403 aa).

Residues isoleucine 23–glycine 203 form the UmuC domain. Mg(2+) contacts are provided by aspartate 27 and aspartate 120. Residue glutamate 121 is part of the active site.

Belongs to the DNA polymerase type-Y family. In terms of assembly, monomer. Requires Mg(2+) as cofactor.

The protein localises to the cytoplasm. It carries out the reaction DNA(n) + a 2'-deoxyribonucleoside 5'-triphosphate = DNA(n+1) + diphosphate. In terms of biological role, poorly processive, error-prone DNA polymerase involved in untargeted mutagenesis. Copies undamaged DNA at stalled replication forks, which arise in vivo from mismatched or misaligned primer ends. These misaligned primers can be extended by PolIV. Exhibits no 3'-5' exonuclease (proofreading) activity. May be involved in translesional synthesis, in conjunction with the beta clamp from PolIII. The sequence is that of DNA polymerase IV from Caulobacter vibrioides (strain ATCC 19089 / CIP 103742 / CB 15) (Caulobacter crescentus).